The chain runs to 215 residues: Glutathione S-transferase F9 (215 aa).

In terms of domain architecture, GST N-terminal spans 2–81; the sequence is VLKVYGPHFA…YVAEKYRSQG (80 aa). 11–12 is a binding site for glutathione; the sequence is AS. A Phosphoserine modification is found at Ser12. Residue Met35 is modified to Methionine sulfoxide. Residues 39-40, 52-53, and 65-66 contribute to the glutathione site; these read HK, TV, and ES. Positions 88–215 constitute a GST C-terminal domain; sequence TVEDRGQVEQ…ETVAKYSFPA (128 aa). Methionine sulfoxide occurs at positions 118, 123, and 184.

It belongs to the GST superfamily. Phi family. Oxidated at Met-35, Met-118, Met-123 and Met-184 in oxidative stress conditions (e.g. hydrogen peroxide H(2)O(2)).

Its subcellular location is the cytoplasm. It localises to the cytosol. It catalyses the reaction RX + glutathione = an S-substituted glutathione + a halide anion + H(+). Its activity is regulated as follows. Redox-regulated enzyme; in oxidative stress conditions methionine oxidation ensure a thermodynamic and structural compensatory mechanism to guarantee H(2)O(2) peroxidase activity despite transferase activity inhibition. Functionally, in vitro, possesses glutathione S-transferase activity toward 1-chloro-2,4-dinitrobenzene (CDNB) and benzyl isothiocyanate (BITC), and glutathione peroxidase activity toward cumene hydroperoxide and linoleic acid-13-hydroperoxide. May be involved in the conjugation of reduced glutathione to a wide number of exogenous and endogenous hydrophobic electrophiles and have a detoxification role against certain herbicides. The protein is Glutathione S-transferase F9 of Arabidopsis thaliana (Mouse-ear cress).